A 176-amino-acid polypeptide reads, in one-letter code: Mitochondrial inner membrane protein Mpv17 (176 aa).

4 helical membrane passes run 18–38 (VQVL…QQLV), 53–73 (TMVS…YKVL), 94–114 (GGFA…LNGL), and 131–151 (LITN…LVPL).

This sequence belongs to the peroxisomal membrane protein PXMP2/4 family. As to expression, ubiquitous. Expressed in pancreas, kidney, muscle, liver, lung, placenta, brain and heart.

The protein localises to the mitochondrion inner membrane. Its function is as follows. Non-selective channel that modulates the membrane potential under normal conditions and oxidative stress, and is involved in mitochondrial homeostasis. Involved in mitochondrial deoxynucleoside triphosphates (dNTP) pool homeostasis and mitochondrial DNA (mtDNA) maintenance. May be involved in the regulation of reactive oxygen species metabolism and the control of oxidative phosphorylation. This chain is Mitochondrial inner membrane protein Mpv17, found in Homo sapiens (Human).